The following is a 259-amino-acid chain: Phosphatidylglycerol--prolipoprotein diacylglyceryl transferase (259 aa).

4 helical membrane passes run 12–32, 46–66, 83–103, and 109–129; these read LSLHWYAVCILVGLLLAVYLA, IIDFILIAFPLAIIGARIYYV, IWNGGIAIYGGLITGTIVLFV, and VLNPIHFLDIAAPSVMLAQAI. Residue Arg131 coordinates a 1,2-diacyl-sn-glycero-3-phospho-(1'-sn-glycerol). 3 helical membrane-spanning segments follow: residues 167–187, 194–214, and 226–246; these read VPTFLYESMWNLIGFVIIMVW, LVDGDIISFYLIWYGCGRLVI, and GIRVSQYMSVLLIIIAIVFIF.

The protein belongs to the Lgt family.

The protein resides in the cell membrane. It catalyses the reaction L-cysteinyl-[prolipoprotein] + a 1,2-diacyl-sn-glycero-3-phospho-(1'-sn-glycerol) = an S-1,2-diacyl-sn-glyceryl-L-cysteinyl-[prolipoprotein] + sn-glycerol 1-phosphate + H(+). It participates in protein modification; lipoprotein biosynthesis (diacylglyceryl transfer). In terms of biological role, catalyzes the transfer of the diacylglyceryl group from phosphatidylglycerol to the sulfhydryl group of the N-terminal cysteine of a prolipoprotein, the first step in the formation of mature lipoproteins. In Streptococcus equi subsp. equi (strain 4047), this protein is Phosphatidylglycerol--prolipoprotein diacylglyceryl transferase.